A 301-amino-acid chain; its full sequence is Probable aspartoacylase (301 aa).

Histidine 13 and glutamate 16 together coordinate Zn(2+). Residues arginine 54 and 61 to 62 each bind substrate; that span reads NR. Histidine 105 contacts Zn(2+). 2 residues coordinate substrate: glutamate 163 and tyrosine 273.

It belongs to the AspA/AstE family. Aspartoacylase subfamily. Zn(2+) serves as cofactor.

It carries out the reaction an N-acyl-L-aspartate + H2O = a carboxylate + L-aspartate. This Prochlorococcus marinus (strain MIT 9215) protein is Probable aspartoacylase.